We begin with the raw amino-acid sequence, 456 residues long: tRNA-2-methylthio-N(6)-dimethylallyladenosine synthase (456 aa).

Positions 18 to 136 (EFFFIQTFGC…FPEYLHRVQV (119 aa)) constitute an MTTase N-terminal domain. [4Fe-4S] cluster is bound by residues cysteine 27, cysteine 63, cysteine 97, cysteine 173, cysteine 177, and cysteine 180. The 233-residue stretch at 159-391 (RKSNVKAFVT…AVNEGIVVGN (233 aa)) folds into the Radical SAM core domain. One can recognise a TRAM domain in the interval 392-455 (KAAEGKIYEV…SFSLVGEVVE (64 aa)).

It belongs to the methylthiotransferase family. MiaB subfamily. As to quaternary structure, monomer. It depends on [4Fe-4S] cluster as a cofactor.

The protein resides in the cytoplasm. The enzyme catalyses N(6)-dimethylallyladenosine(37) in tRNA + (sulfur carrier)-SH + AH2 + 2 S-adenosyl-L-methionine = 2-methylsulfanyl-N(6)-dimethylallyladenosine(37) in tRNA + (sulfur carrier)-H + 5'-deoxyadenosine + L-methionine + A + S-adenosyl-L-homocysteine + 2 H(+). In terms of biological role, catalyzes the methylthiolation of N6-(dimethylallyl)adenosine (i(6)A), leading to the formation of 2-methylthio-N6-(dimethylallyl)adenosine (ms(2)i(6)A) at position 37 in tRNAs that read codons beginning with uridine. The protein is tRNA-2-methylthio-N(6)-dimethylallyladenosine synthase of Clostridium botulinum (strain Alaska E43 / Type E3).